Consider the following 199-residue polypeptide: Probable thymidylate kinase (199 aa).

Residue 7-14 (GLDGSGKT) participates in ATP binding.

Belongs to the thymidylate kinase family.

It carries out the reaction dTMP + ATP = dTDP + ADP. This is Probable thymidylate kinase from Halobacterium salinarum (strain ATCC 29341 / DSM 671 / R1).